A 1323-amino-acid polypeptide reads, in one-letter code: DNA-directed RNA polymerase subunit beta' (1323 aa).

Zn(2+)-binding residues include cysteine 60, cysteine 62, cysteine 75, and cysteine 78. The Mg(2+) site is built by aspartate 535, aspartate 537, and aspartate 539. 4 residues coordinate Zn(2+): cysteine 894, cysteine 977, cysteine 984, and cysteine 987.

It belongs to the RNA polymerase beta' chain family. As to quaternary structure, the RNAP catalytic core consists of 2 alpha, 1 beta, 1 beta' and 1 omega subunit. When a sigma factor is associated with the core the holoenzyme is formed, which can initiate transcription. Mg(2+) serves as cofactor. Requires Zn(2+) as cofactor.

The catalysed reaction is RNA(n) + a ribonucleoside 5'-triphosphate = RNA(n+1) + diphosphate. Functionally, DNA-dependent RNA polymerase catalyzes the transcription of DNA into RNA using the four ribonucleoside triphosphates as substrates. The protein is DNA-directed RNA polymerase subunit beta' of Corynebacterium jeikeium (strain K411).